Reading from the N-terminus, the 423-residue chain is Carboxypeptidase B2 (423 aa).

The first 22 residues, Met1 to Ala22, serve as a signal peptide directing secretion. Positions Phe23–Arg114 are cleaved as a propeptide — activation peptide. 4 N-linked (GlcNAc...) asparagine glycosylation sites follow: Asn44, Asn73, Asn85, and Asn108. In terms of domain architecture, Peptidase M14 spans Gln122–Val419. The cysteines at positions 178 and 191 are disulfide-linked. Positions 181 and 184 each coordinate Zn(2+). Substrate-binding positions include His181–Glu184 and Arg239. An N-linked (GlcNAc...) asparagine glycan is attached at Asn241. Disulfide bonds link Cys250–Cys274 and Cys265–Cys279. Position 256 to 257 (Asn256 to Arg257) interacts with substrate. Residue His310 coordinates Zn(2+). Residues Ser311 to Tyr312 and Tyr363 each bind substrate. The active-site Proton donor/acceptor is Glu385.

It belongs to the peptidase M14 family. Requires Zn(2+) as cofactor.

It is found in the secreted. It catalyses the reaction Release of C-terminal Arg and Lys from a polypeptide.. With respect to regulation, TAFI/CPB2 is unique among carboxypeptidases in that it spontaneously inactivates with a short half-life, a property that is crucial for its role in controlling blood clot lysis. The zymogen is stabilized by interactions with the activation peptide. Release of the activation peptide increases a dynamic flap mobility and in time this leads to conformational changes that disrupt the catalytic site and expose a cryptic thrombin-cleavage site present at Arg-324. Its function is as follows. Cleaves C-terminal arginine or lysine residues from biologically active peptides such as kinins or anaphylatoxins in the circulation thereby regulating their activities. Down-regulates fibrinolysis by removing C-terminal lysine residues from fibrin that has already been partially degraded by plasmin. This Bos taurus (Bovine) protein is Carboxypeptidase B2 (CPB2).